We begin with the raw amino-acid sequence, 120 residues long: Spermidine export protein MdtJ (120 aa).

4 helical membrane-spanning segments follow: residues 1 to 21 (MFYW…TLSM), 31 to 51 (AGYI…SFAV), 54 to 74 (IALG…ITVF), and 81 to 101 (EVLS…IVLI).

This sequence belongs to the drug/metabolite transporter (DMT) superfamily. Small multidrug resistance (SMR) (TC 2.A.7.1) family. MdtJ subfamily. Forms a complex with MdtI.

It localises to the cell inner membrane. Functionally, catalyzes the excretion of spermidine. The polypeptide is Spermidine export protein MdtJ (Salmonella arizonae (strain ATCC BAA-731 / CDC346-86 / RSK2980)).